The primary structure comprises 28 residues: Venom protein (28 aa).

The tract at residues 1 to 28 (KEGYPDGQNGKKIPCAINDNISKTXEQA) is disordered. Residues 19–28 (DNISKTXEQA) show a composition bias toward polar residues.

In terms of tissue distribution, expressed by the venom gland.

It localises to the secreted. Its function is as follows. Causes symptoms of mild intoxication and transient paralysis in insects (A.domestica). The protein is Venom protein of Rhopalurus junceus (Caribbean blue scorpion).